Consider the following 156-residue polypeptide: Peroxisome assembly protein 22 (156 aa).

A helical transmembrane segment spans residues 24–46; that stretch reads LSIIAVGVLSTVAVTVGYLLYLY.

The protein belongs to the peroxin-22 family.

The protein localises to the peroxisome membrane. In terms of biological role, involved in peroxisome biogenesis. This Kluyveromyces lactis (strain ATCC 8585 / CBS 2359 / DSM 70799 / NBRC 1267 / NRRL Y-1140 / WM37) (Yeast) protein is Peroxisome assembly protein 22 (PEX22).